Here is a 150-residue protein sequence, read N- to C-terminus: Large ribosomal subunit protein bL9 (150 aa).

The protein belongs to the bacterial ribosomal protein bL9 family.

Functionally, binds to the 23S rRNA. The chain is Large ribosomal subunit protein bL9 from Albidiferax ferrireducens (strain ATCC BAA-621 / DSM 15236 / T118) (Rhodoferax ferrireducens).